We begin with the raw amino-acid sequence, 325 residues long: Glutarate 2-hydroxylase (325 aa).

Residues histidine 160, aspartate 162, and histidine 292 each contribute to the Fe cation site.

The protein belongs to the glutarate hydroxylase family. As to quaternary structure, homotetramer. Requires Fe(2+) as cofactor.

The enzyme catalyses glutarate + 2-oxoglutarate + O2 = (S)-2-hydroxyglutarate + succinate + CO2. It participates in amino-acid degradation. Functionally, acts as an alpha-ketoglutarate-dependent dioxygenase catalyzing hydroxylation of glutarate (GA) to L-2-hydroxyglutarate (L2HG). Functions in a L-lysine degradation pathway that proceeds via cadaverine, glutarate and L-2-hydroxyglutarate. The protein is Glutarate 2-hydroxylase of Pseudomonas putida (strain GB-1).